The chain runs to 253 residues: 5'/3'-nucleotidase SurE (253 aa).

4 residues coordinate a divalent metal cation: Asp-8, Asp-9, Ser-39, and Asn-92.

This sequence belongs to the SurE nucleotidase family. The cofactor is a divalent metal cation.

It is found in the cytoplasm. The enzyme catalyses a ribonucleoside 5'-phosphate + H2O = a ribonucleoside + phosphate. The catalysed reaction is a ribonucleoside 3'-phosphate + H2O = a ribonucleoside + phosphate. It catalyses the reaction [phosphate](n) + H2O = [phosphate](n-1) + phosphate + H(+). Functionally, nucleotidase with a broad substrate specificity as it can dephosphorylate various ribo- and deoxyribonucleoside 5'-monophosphates and ribonucleoside 3'-monophosphates with highest affinity to 3'-AMP. Also hydrolyzes polyphosphate (exopolyphosphatase activity) with the preference for short-chain-length substrates (P20-25). Might be involved in the regulation of dNTP and NTP pools, and in the turnover of 3'-mononucleotides produced by numerous intracellular RNases (T1, T2, and F) during the degradation of various RNAs. The protein is 5'/3'-nucleotidase SurE of Salmonella typhimurium (strain LT2 / SGSC1412 / ATCC 700720).